An 840-amino-acid polypeptide reads, in one-letter code: Leucine--tRNA ligase (840 aa).

The 'HIGH' region motif lies at 44–55 (PYPSANGLHVGH). Positions 617–621 (KMSKS) match the 'KMSKS' region motif. An ATP-binding site is contributed by K620.

It belongs to the class-I aminoacyl-tRNA synthetase family.

The protein resides in the cytoplasm. It carries out the reaction tRNA(Leu) + L-leucine + ATP = L-leucyl-tRNA(Leu) + AMP + diphosphate. The polypeptide is Leucine--tRNA ligase (Borrelia garinii subsp. bavariensis (strain ATCC BAA-2496 / DSM 23469 / PBi) (Borreliella bavariensis)).